The chain runs to 210 residues: Orotate phosphoribosyltransferase (210 aa).

Residues R97, K101, H103, and 123–131 contribute to the 5-phospho-alpha-D-ribose 1-diphosphate site; that span reads EDLISTGGS. Position 127 (S127) interacts with orotate.

It belongs to the purine/pyrimidine phosphoribosyltransferase family. PyrE subfamily. In terms of assembly, homodimer. Mg(2+) is required as a cofactor.

It catalyses the reaction orotidine 5'-phosphate + diphosphate = orotate + 5-phospho-alpha-D-ribose 1-diphosphate. It functions in the pathway pyrimidine metabolism; UMP biosynthesis via de novo pathway; UMP from orotate: step 1/2. In terms of biological role, catalyzes the transfer of a ribosyl phosphate group from 5-phosphoribose 1-diphosphate to orotate, leading to the formation of orotidine monophosphate (OMP). This is Orotate phosphoribosyltransferase from Porphyromonas gingivalis (strain ATCC BAA-308 / W83).